A 487-amino-acid polypeptide reads, in one-letter code: DNA ligase (487 aa).

The N6-AMP-lysine intermediate role is filled by lysine 159. ATP-binding residues include arginine 164, arginine 182, and glutamate 217. Glutamate 217 provides a ligand contact to a divalent metal cation. Positions glutamate 229–alanine 237 are interaction with the sliding clamp. Glutamate 344 contacts a divalent metal cation. Arginine 359 and lysine 365 together coordinate ATP.

It belongs to the ATP-dependent DNA ligase family. In terms of assembly, interacts with the sliding clamp. A divalent metal cation is required as a cofactor.

The catalysed reaction is ATP + (deoxyribonucleotide)n-3'-hydroxyl + 5'-phospho-(deoxyribonucleotide)m = (deoxyribonucleotide)n+m + AMP + diphosphate.. In terms of biological role, DNA ligase, which is expressed in the early stage of lytic development, has been implicated in T4 DNA synthesis and genetic recombination. It may also play a role in T4 DNA repair. In Enterobacteria phage T4 (Bacteriophage T4), this protein is DNA ligase (30).